Reading from the N-terminus, the 249-residue chain is Nicotinamide/nicotinic acid mononucleotide adenylyltransferase (249 aa).

Serine 34 and phenylalanine 35 together coordinate NAD(+). Histidine 42 and lysine 75 together coordinate ATP. The NAD(+) site is built by threonine 112, glycine 141, aspartate 143, tryptophan 154, arginine 173, and asparagine 204. ATP is bound at residue 209 to 210 (SR).

This sequence belongs to the eukaryotic NMN adenylyltransferase family. It depends on a divalent metal cation as a cofactor.

It carries out the reaction beta-nicotinamide D-ribonucleotide + ATP + H(+) = diphosphate + NAD(+). The catalysed reaction is nicotinate beta-D-ribonucleotide + ATP + H(+) = deamido-NAD(+) + diphosphate. It participates in cofactor biosynthesis; NAD(+) biosynthesis; deamido-NAD(+) from nicotinate D-ribonucleotide: step 1/1. It functions in the pathway cofactor biosynthesis; NAD(+) biosynthesis; NAD(+) from nicotinamide D-ribonucleotide: step 1/1. Its function is as follows. Catalyzes the formation of NAD(+) from nicotinamide mononucleotide (NMN) and ATP. Can also use the deamidated form; nicotinic acid mononucleotide (NaMN) as substrate. The chain is Nicotinamide/nicotinic acid mononucleotide adenylyltransferase from Oryza sativa subsp. japonica (Rice).